A 207-amino-acid chain; its full sequence is Thiamine-phosphate synthase (207 aa).

Residues 36–40 (QMRIK) and Asp68 contribute to the 4-amino-2-methyl-5-(diphosphooxymethyl)pyrimidine site. Asp69 and Asp88 together coordinate Mg(2+). A 4-amino-2-methyl-5-(diphosphooxymethyl)pyrimidine-binding site is contributed by Ser106. 132 to 134 (TKT) is a 2-[(2R,5Z)-2-carboxy-4-methylthiazol-5(2H)-ylidene]ethyl phosphate binding site. Lys135 provides a ligand contact to 4-amino-2-methyl-5-(diphosphooxymethyl)pyrimidine. Residues Gly162 and 182–183 (IS) each bind 2-[(2R,5Z)-2-carboxy-4-methylthiazol-5(2H)-ylidene]ethyl phosphate.

The protein belongs to the thiamine-phosphate synthase family. Requires Mg(2+) as cofactor.

It carries out the reaction 2-[(2R,5Z)-2-carboxy-4-methylthiazol-5(2H)-ylidene]ethyl phosphate + 4-amino-2-methyl-5-(diphosphooxymethyl)pyrimidine + 2 H(+) = thiamine phosphate + CO2 + diphosphate. It catalyses the reaction 2-(2-carboxy-4-methylthiazol-5-yl)ethyl phosphate + 4-amino-2-methyl-5-(diphosphooxymethyl)pyrimidine + 2 H(+) = thiamine phosphate + CO2 + diphosphate. The catalysed reaction is 4-methyl-5-(2-phosphooxyethyl)-thiazole + 4-amino-2-methyl-5-(diphosphooxymethyl)pyrimidine + H(+) = thiamine phosphate + diphosphate. Its pathway is cofactor biosynthesis; thiamine diphosphate biosynthesis; thiamine phosphate from 4-amino-2-methyl-5-diphosphomethylpyrimidine and 4-methyl-5-(2-phosphoethyl)-thiazole: step 1/1. Its function is as follows. Condenses 4-methyl-5-(beta-hydroxyethyl)thiazole monophosphate (THZ-P) and 2-methyl-4-amino-5-hydroxymethyl pyrimidine pyrophosphate (HMP-PP) to form thiamine monophosphate (TMP). The polypeptide is Thiamine-phosphate synthase (Pyrococcus furiosus (strain ATCC 43587 / DSM 3638 / JCM 8422 / Vc1)).